The following is a 210-amino-acid chain: 3-hexulose-6-phosphate synthase (210 aa).

The protein belongs to the HPS/KGPDC family. HPS subfamily.

The catalysed reaction is D-ribulose 5-phosphate + formaldehyde = D-arabino-hex-3-ulose 6-phosphate. It participates in one-carbon metabolism; formaldehyde assimilation via RuMP pathway; D-fructose 6-phosphate from D-ribulose 5-phosphate and formaldehyde: step 1/2. Functionally, catalyzes the condensation of ribulose 5-phosphate with formaldehyde to form 3-hexulose 6-phosphate. This chain is 3-hexulose-6-phosphate synthase, found in Staphylococcus haemolyticus (strain JCSC1435).